A 161-amino-acid polypeptide reads, in one-letter code: uncharacterized protein (161 aa).

Over residues methionine 1–glycine 16 the composition is skewed to low complexity. Disordered regions lie at residues methionine 1–leucine 23, glycine 50–alanine 91, and arginine 140–serine 161.

This is an uncharacterized protein from Homo sapiens (Human).